Reading from the N-terminus, the 121-residue chain is Small ribosomal subunit protein uS13 (121 aa).

Positions 92-121 (RKGLPVRGQSSKTNARTVKGPRKTVANKKK) are disordered. Positions 110 to 121 (KGPRKTVANKKK) are enriched in basic residues.

It belongs to the universal ribosomal protein uS13 family. In terms of assembly, part of the 30S ribosomal subunit. Forms a loose heterodimer with protein S19. Forms two bridges to the 50S subunit in the 70S ribosome.

Located at the top of the head of the 30S subunit, it contacts several helices of the 16S rRNA. In the 70S ribosome it contacts the 23S rRNA (bridge B1a) and protein L5 of the 50S subunit (bridge B1b), connecting the 2 subunits; these bridges are implicated in subunit movement. Contacts the tRNAs in the A and P-sites. The polypeptide is Small ribosomal subunit protein uS13 (Mycoplasma capricolum subsp. capricolum (strain California kid / ATCC 27343 / NCTC 10154)).